The primary structure comprises 435 residues: Cysteine--tRNA ligase (435 aa).

Zn(2+) is bound at residue Cys24. The 'HIGH' region motif lies at 26–36 (PTVYDHIHIGN). 3 residues coordinate Zn(2+): Cys202, His228, and Glu232. A 'KMSKS' region motif is present at residues 260–264 (KMSKS). Lys263 provides a ligand contact to ATP.

It belongs to the class-I aminoacyl-tRNA synthetase family. Monomer. Zn(2+) serves as cofactor.

It localises to the cytoplasm. The enzyme catalyses tRNA(Cys) + L-cysteine + ATP = L-cysteinyl-tRNA(Cys) + AMP + diphosphate. The chain is Cysteine--tRNA ligase from Mycoplasmoides gallisepticum (strain R(low / passage 15 / clone 2)) (Mycoplasma gallisepticum).